A 156-amino-acid polypeptide reads, in one-letter code: Small ribosomal subunit protein uS7 (156 aa).

This sequence belongs to the universal ribosomal protein uS7 family. Part of the 30S ribosomal subunit. Contacts proteins S9 and S11.

One of the primary rRNA binding proteins, it binds directly to 16S rRNA where it nucleates assembly of the head domain of the 30S subunit. Is located at the subunit interface close to the decoding center, probably blocks exit of the E-site tRNA. The sequence is that of Small ribosomal subunit protein uS7 from Shewanella denitrificans (strain OS217 / ATCC BAA-1090 / DSM 15013).